The primary structure comprises 304 residues: Acetylglutamate kinase (304 aa).

Substrate is bound by residues 77-78 (GG), arginine 99, and asparagine 193.

It belongs to the acetylglutamate kinase family. ArgB subfamily.

The protein localises to the cytoplasm. It carries out the reaction N-acetyl-L-glutamate + ATP = N-acetyl-L-glutamyl 5-phosphate + ADP. The protein operates within amino-acid biosynthesis; L-arginine biosynthesis; N(2)-acetyl-L-ornithine from L-glutamate: step 2/4. Functionally, catalyzes the ATP-dependent phosphorylation of N-acetyl-L-glutamate. This chain is Acetylglutamate kinase, found in Pelodictyon phaeoclathratiforme (strain DSM 5477 / BU-1).